A 130-amino-acid chain; its full sequence is Small ribosomal subunit protein uS9 (130 aa).

This sequence belongs to the universal ribosomal protein uS9 family.

In Hahella chejuensis (strain KCTC 2396), this protein is Small ribosomal subunit protein uS9.